A 172-amino-acid chain; its full sequence is MSNPKVFFDMAIAGNPAGRIVMELYADTTPRTAENFRALCTGEKGVGRSGKPLHYKGSTFHRVIPNFMCQGGDFTAGNGTGAESIYGAKFADENFIKRHTGPGILSMANAGAGTNGSQFFICTEKTEWLDGKHVVFGKVIEGMNVVRDIEKVGSGSGKTSRPVTIADCGQLS.

The 164-residue stretch at 7–170 (FFDMAIAGNP…RPVTIADCGQ (164 aa)) folds into the PPIase cyclophilin-type domain.

The protein belongs to the cyclophilin-type PPIase family. Expressed in meristematic tissues, with higher levels in nodules.

Its subcellular location is the cytoplasm. It carries out the reaction [protein]-peptidylproline (omega=180) = [protein]-peptidylproline (omega=0). Its activity is regulated as follows. Binds cyclosporin A (CsA). CsA mediates some of its effects via an inhibitory action on PPIase. Functionally, PPIases accelerate the folding of proteins. It catalyzes the cis-trans isomerization of proline imidic peptide bonds in oligopeptides. This chain is Peptidyl-prolyl cis-trans isomerase, found in Lupinus luteus (European yellow lupine).